The sequence spans 216 residues: Sugar fermentation stimulation protein homolog (216 aa).

This sequence belongs to the SfsA family.

The chain is Sugar fermentation stimulation protein homolog from Thermoplasma volcanium (strain ATCC 51530 / DSM 4299 / JCM 9571 / NBRC 15438 / GSS1).